A 306-amino-acid polypeptide reads, in one-letter code: Porphobilinogen deaminase (306 aa).

An S-(dipyrrolylmethanemethyl)cysteine modification is found at cysteine 237.

Belongs to the HMBS family. In terms of assembly, monomer. The cofactor is dipyrromethane.

It catalyses the reaction 4 porphobilinogen + H2O = hydroxymethylbilane + 4 NH4(+). The protein operates within porphyrin-containing compound metabolism; protoporphyrin-IX biosynthesis; coproporphyrinogen-III from 5-aminolevulinate: step 2/4. Functionally, tetrapolymerization of the monopyrrole PBG into the hydroxymethylbilane pre-uroporphyrinogen in several discrete steps. This chain is Porphobilinogen deaminase, found in Syntrophus aciditrophicus (strain SB).